The chain runs to 322 residues: tRNA-modifying protein YgfZ (322 aa).

Position 182 (Trp182) interacts with folate.

This sequence belongs to the tRNA-modifying YgfZ family.

Its subcellular location is the cytoplasm. In terms of biological role, folate-binding protein involved in regulating the level of ATP-DnaA and in the modification of some tRNAs. It is probably a key factor in regulatory networks that act via tRNA modification, such as initiation of chromosomal replication. This is tRNA-modifying protein YgfZ from Vibrio parahaemolyticus serotype O3:K6 (strain RIMD 2210633).